Here is a 202-residue protein sequence, read N- to C-terminus: NADH-quinone oxidoreductase subunit B 2 (202 aa).

Cys38, Cys39, Cys104, and Cys133 together coordinate [4Fe-4S] cluster.

Belongs to the complex I 20 kDa subunit family. As to quaternary structure, NDH-1 is composed of 14 different subunits. Subunits NuoB, C, D, E, F, and G constitute the peripheral sector of the complex. [4Fe-4S] cluster serves as cofactor.

It is found in the cell inner membrane. It carries out the reaction a quinone + NADH + 5 H(+)(in) = a quinol + NAD(+) + 4 H(+)(out). Its function is as follows. NDH-1 shuttles electrons from NADH, via FMN and iron-sulfur (Fe-S) centers, to quinones in the respiratory chain. The immediate electron acceptor for the enzyme in this species is believed to be ubiquinone. Couples the redox reaction to proton translocation (for every two electrons transferred, four hydrogen ions are translocated across the cytoplasmic membrane), and thus conserves the redox energy in a proton gradient. The chain is NADH-quinone oxidoreductase subunit B 2 from Koribacter versatilis (strain Ellin345).